The chain runs to 321 residues: Gibberellin 2-beta-dioxygenase 4 (321 aa).

In terms of domain architecture, Fe2OG dioxygenase spans 156-269 (DSDSVLRVNH…RLSTAYFAGP (114 aa)). 3 residues coordinate Fe cation: His193, Asp195, and His250. Residue Arg260 is part of the active site.

The protein belongs to the iron/ascorbate-dependent oxidoreductase family. GA2OX subfamily. Fe(2+) serves as cofactor. Expressed at the base of the shoot apical meristem and developing leaf primordia.

The catalysed reaction is gibberellin A1 + 2-oxoglutarate + O2 = gibberellin A8 + succinate + CO2. The protein operates within plant hormone biosynthesis; gibberellin biosynthesis. Catalyzes the 2-beta-hydroxylation of several biologically active gibberellins, leading to the homeostatic regulation of their endogenous level. Catabolism of gibberellins (GAs) plays a central role in plant development. Converts GA9/GA20 to GA51/GA29 and GA4/GA1 to GA34/GA8. This chain is Gibberellin 2-beta-dioxygenase 4 (GA2OX4), found in Arabidopsis thaliana (Mouse-ear cress).